We begin with the raw amino-acid sequence, 867 residues long: Ent-copalyl diphosphate synthase 1, chloroplastic (867 aa).

The N-terminal 35 residues, M1–R35, are a transit peptide targeting the chloroplast. The disordered stretch occupies residues M1–Q134. The segment covering R51 to D64 has biased composition (basic and acidic residues). A compositionally biased stretch (low complexity) spans A74–S89. Residues I99 to Q121 show a composition bias toward basic and acidic residues. The segment covering E124–L133 has biased composition (acidic residues). A substrate-binding site is contributed by K286. The DXDD motif motif lies at E418–D421. K504 is a binding site for substrate.

This sequence belongs to the terpene synthase family. The cofactor is Mg(2+).

The protein resides in the plastid. The protein localises to the chloroplast. It catalyses the reaction (2E,6E,10E)-geranylgeranyl diphosphate = ent-copalyl diphosphate. The protein operates within plant hormone biosynthesis; gibberellin biosynthesis. Its function is as follows. Catalyzes the conversion of geranylgeranyl diphosphate to the gibberellin precursor ent-copalyl diphosphate. The chain is Ent-copalyl diphosphate synthase 1, chloroplastic (CPS1) from Oryza sativa subsp. japonica (Rice).